Here is a 908-residue protein sequence, read N- to C-terminus: MEEGGRDKAPVQPQQSPAAAPGGTDEKPSGKERRDAGDKDKEQELSEEDKQLQDELEMLVERLGEKDTSLYRPALEELRRQIRSSTTSMTSVPKPLKFLRPHYGKLKEIYENMAPGENKRFAADIISVLAMTMSGERECLKYRLVGSQEELASWGHEYVRHLAGEVAKEWQELDDAEKVQREPLLTLVKEIVPYNMAHNAEHEACDLLMEIEQVDMLEKDIDENAYAKVCLYLTSCVNYVPEPENSALLRCALGVFRKFSRFPEALRLALMLNDMELVEDIFTSCKDVVVQKQMAFMLGRHGVFLELSEDVEEYEDLTEIMSNVQLNSNFLALARELDIMEPKVPDDIYKTHLENNRFGGSGSQVDSARMNLASSFVNGFVNAAFGQDKLLTDDGNKWLYKNKDHGMLSAAASLGMILLWDVDGGLTQIDKYLYSSEDYIKSGALLACGIVNSGVRNECDPALALLSDYVLHNSNTMRLGSIFGLGLAYAGSNREDVLTLLLPVMGDSKSSMEVAGVTALACGMIAVGSCNGDVTSTILQTIMEKSETELKDTYARWLPLGLGLNHLGKGEAIEAILAALEVVSEPFRSFANTLVDVCAYAGSGNVLKVQQLLHICSEHFDSKEKEEDKDKKEKKDKDKKEAPADMGAHQGVAVLGIALIAMGEEIGAEMALRTFGHLLRYGEPTLRRAVPLALALISVSNPRLNILDTLSKFSHDADPEVSYNSIFAMGMVGSGTNNARLAAMLRQLAQYHAKDPNNLFMVRLAQGLTHLGKGTLTLCPYHSDRQLMSQVAVAGLLTVLVSFLDVRNIILGKSHYVLYGLVAAMQPRMLVTFDEELRPLPVSVRVGQAVDVVGQAGKPKTITGFQTHTTPVLLAHGERAELATEEFLPVTPILEGFVILRKNPNYDL.

At Met-1 the chain carries N-acetylmethionine. The tract at residues 1-52 is disordered; the sequence is MEEGGRDKAPVQPQQSPAAAPGGTDEKPSGKERRDAGDKDKEQELSEEDKQL. The segment covering 10-21 has biased composition (low complexity); it reads PVQPQQSPAAAP. At Ser-16 the chain carries Phosphoserine. Thr-24 carries the post-translational modification Phosphothreonine. Residues 24 to 52 show a composition bias toward basic and acidic residues; it reads TDEKPSGKERRDAGDKDKEQELSEEDKQL. A phosphoserine mark is found at Ser-29 and Ser-147. Phosphotyrosine is present on Tyr-194. 2 positions are modified to phosphoserine: Ser-361 and Ser-363. PC repeat units follow at residues 409–442, 443–479, 480–514, 517–551, and 560–589; these read SAAA…YIKS, GALL…TMRL, GSIF…SMEV, VTAL…TELK, and LGLG…PFRS. Lys-551 is subject to N6-acetyllysine. Over residues 623–643 the composition is skewed to basic and acidic residues; it reads KEKEEDKDKKEKKDKDKKEAP. Residues 623 to 645 are disordered; it reads KEKEEDKDKKEKKDKDKKEAPAD. PC repeat units lie at residues 692 to 723 and 742 to 757; these read LALA…EVSY and AAML…KDPN. A required for interaction with UBLCP1 region spans residues 708-903; sequence DTLSKFSHDA…LEGFVILRKN (196 aa).

It belongs to the proteasome subunit S2 family. In terms of assembly, component of the 19S proteasome regulatory particle complex. The 26S proteasome consists of a 20S core particle (CP) and two 19S regulatory subunits (RP). The regulatory particle is made of a lid composed of 9 subunits, a base containing 6 ATPases and few additional components including PSMD2. Interacts with RPGRIP1L. Interacts with CRY1 in a KDM8-dependent manner. Interacts (via C-terminus) with phosphatase UBLCP1 (via ubiquitin-like domain); the interaction recruits UBLCP1 to the 19S regulatory particle where it dephosphorylates 19S subunit PSMC2/RPT1 which impairs PSMC2 ATPase activity and disrupts 26S proteasome assembly. As to expression, found in skeletal muscle, liver, heart, brain, kidney, pancreas, lung and placenta.

Functionally, component of the 26S proteasome, a multiprotein complex involved in the ATP-dependent degradation of ubiquitinated proteins. This complex plays a key role in the maintenance of protein homeostasis by removing misfolded or damaged proteins, which could impair cellular functions, and by removing proteins whose functions are no longer required. Therefore, the proteasome participates in numerous cellular processes, including cell cycle progression, apoptosis, or DNA damage repair. In terms of biological role, binds to the intracellular domain of tumor necrosis factor type 1 receptor. The binding domain of TRAP1 and TRAP2 resides outside the death domain of TNFR1. The polypeptide is 26S proteasome non-ATPase regulatory subunit 2 (PSMD2) (Homo sapiens (Human)).